A 62-amino-acid chain; its full sequence is Alpha-conotoxin-like Ca1.1 (62 aa).

Residues 1–21 form the signal peptide; sequence MGMRMMFTVFLLVVLATTVVS. Positions 22–46 are excised as a propeptide; that stretch reads FTSDRASDGRNAAANAFDLIALIAR. Gln47 carries the pyrrolidone carboxylic acid modification. Intrachain disulfides connect Cys49/Cys55 and Cys50/Cys61.

This sequence belongs to the conotoxin A superfamily. Expressed by the venom duct.

The protein resides in the secreted. Alpha-conotoxins act on postsynaptic membranes, they bind to the nicotinic acetylcholine receptors (nAChR) and thus inhibit them. This is Alpha-conotoxin-like Ca1.1 from Conus caracteristicus (Characteristic cone).